A 219-amino-acid polypeptide reads, in one-letter code: Ribose-5-phosphate isomerase A (219 aa).

Substrate-binding positions include 28 to 31 (TGST), 81 to 84 (DGAD), and 94 to 97 (KGGG). Glutamate 103 serves as the catalytic Proton acceptor. Lysine 121 provides a ligand contact to substrate.

This sequence belongs to the ribose 5-phosphate isomerase family. As to quaternary structure, homodimer.

The enzyme catalyses aldehydo-D-ribose 5-phosphate = D-ribulose 5-phosphate. It functions in the pathway carbohydrate degradation; pentose phosphate pathway; D-ribose 5-phosphate from D-ribulose 5-phosphate (non-oxidative stage): step 1/1. Catalyzes the reversible conversion of ribose-5-phosphate to ribulose 5-phosphate. This Acidithiobacillus ferrooxidans (strain ATCC 23270 / DSM 14882 / CIP 104768 / NCIMB 8455) (Ferrobacillus ferrooxidans (strain ATCC 23270)) protein is Ribose-5-phosphate isomerase A.